The sequence spans 188 residues: dCTP deaminase (188 aa).

Residues 111–116, 135–137, Q156, Y170, and Q180 contribute to the dCTP site; these read KSTYAR and TLE. The Proton donor/acceptor role is filled by E137.

The protein belongs to the dCTP deaminase family. In terms of assembly, homotrimer.

The enzyme catalyses dCTP + H2O + H(+) = dUTP + NH4(+). The protein operates within pyrimidine metabolism; dUMP biosynthesis; dUMP from dCTP (dUTP route): step 1/2. In terms of biological role, catalyzes the deamination of dCTP to dUTP. The polypeptide is dCTP deaminase (Cupriavidus necator (strain ATCC 17699 / DSM 428 / KCTC 22496 / NCIMB 10442 / H16 / Stanier 337) (Ralstonia eutropha)).